The primary structure comprises 160 residues: Nucleotide-binding protein Tgr7_1196 (160 aa).

It belongs to the YajQ family.

Its function is as follows. Nucleotide-binding protein. This chain is Nucleotide-binding protein Tgr7_1196, found in Thioalkalivibrio sulfidiphilus (strain HL-EbGR7).